The chain runs to 528 residues: MMWWFLLIGLASAAATASSASSASFESRCQHFHKEIHLQNVHVLSTTYVPIGSNIPMVYNPPICGGTASSSISTIQFCQVALNVTTSDKSQFFMEAWLPSNYTGRFLSTGNGGLNGCVSYADMVYATQYGFATIGTNNGHFGDTGQYFLNNPEVIEDFAYRALHTGTVVGKALTKLFYPQGYKNSYYLGCSTGGRQGWKSIQRFPDDFDGVVAGAPAINFVNLCSWGSRFLKITGPPGSETFVTSAQWSAVHNEILRQCDALDGAVDGIIEDTDLCQPVFETLLCNSTAVDKTSCLTGVQANTVNEVFSAMYGLDGKWLYPRMQPGSELAASFIYYSGNGFKYSDDWYKYVVYNDSNWGHSTWTLADAAAAAAQDPFQISSFDGNISGFQKAGGKVLHYHGLEDAIITSDSSKAYYKHVADTMGLSPSELDHFYRLFPISGMGHCSPGTGAASIGQGSSTYAGDDPQDNVLMAIVQWVEKGIAPEYVRGSKMSRDGTIDYRRKHCKYPKRNRYVGPGKYTDENAWKCV.

Residues M1–S19 form the signal peptide. Intrachain disulfides connect C29–C78, C64–C117, C190–C445, C259–C276, C285–C295, and C505–C527. Residues N83 and N101 are each glycosylated (N-linked (GlcNAc...) asparagine). The Acyl-ester intermediate role is filled by S191. Ca(2+) is bound by residues D260, D263, A265, D267, and I269. 3 N-linked (GlcNAc...) asparagine glycosylation sites follow: N286, N354, and N385. Residues D404 and H444 each act as charge relay system in the active site.

The protein belongs to the tannase family.

The protein resides in the secreted. The enzyme catalyses feruloyl-polysaccharide + H2O = ferulate + polysaccharide.. Involved in degradation of plant cell walls. Hydrolyzes the feruloyl-arabinose ester bond in arabinoxylans as well as the feruloyl-galactose and feruloyl-arabinose ester bonds in pectin. The chain is Probable feruloyl esterase B-1 (faeB-1) from Aspergillus fumigatus (strain ATCC MYA-4609 / CBS 101355 / FGSC A1100 / Af293) (Neosartorya fumigata).